The sequence spans 468 residues: MSKQQIGVVGMAVMGRNLALNIESRGYTVSVFNRSREKTEEVIAENTGKKLVPYYTVQEFVESLETPRRILLMVKAGAGTDSAIDSLKPYLDKGDIIIDGGNTFFQDTIRRNRELSAEGFNFIGTGVSGGEEGALKGPSIMPGGQKEAYELVAPILKQIAAVAEDGEPCVTYIGADGAGHYVKMVHNGIEYGDMQLIAEAYALLKGGLALSNEELAQTFTEWNEGELSSYLIDITKDIFTKKDEEGKYLVDVILDEAANKGTGKWTSQSSLDLGEPLSLITESVFARYISSLKDQRVAASKVLSGPQAQPVGDKAGFIEKVRRALYLGKIVSYAQGFSQLRAASDEYNWDLNYGEIAKIFRAGCIIRAQFLQKITDAYAQNAGIANLLLAPYFKQIADDYQQALRDVVAYAVQNGIPVPTVSAAIAYYDSYRSAVLPANLIQAQRDYFGAHTYKRTDKEGVFHTEWLE.

NADP(+)-binding positions include 10–15 (GMAVMG), 33–35 (NRS), 74–76 (VKA), and Asn102. Substrate is bound by residues Asn102 and 128–130 (SGG). Lys183 (proton acceptor) is an active-site residue. 186–187 (HN) contributes to the substrate binding site. The Proton donor role is filled by Glu190. The substrate site is built by Tyr191, Lys260, Arg287, Arg445, and His451.

It belongs to the 6-phosphogluconate dehydrogenase family. In terms of assembly, homodimer.

It carries out the reaction 6-phospho-D-gluconate + NADP(+) = D-ribulose 5-phosphate + CO2 + NADPH. It participates in carbohydrate degradation; pentose phosphate pathway; D-ribulose 5-phosphate from D-glucose 6-phosphate (oxidative stage): step 3/3. In terms of biological role, catalyzes the oxidative decarboxylation of 6-phosphogluconate to ribulose 5-phosphate and CO(2), with concomitant reduction of NADP to NADPH. The polypeptide is 6-phosphogluconate dehydrogenase, decarboxylating (gnd) (Klebsiella pneumoniae).